Here is a 147-residue protein sequence, read N- to C-terminus: Auxin-responsive protein SAUR41 (147 aa).

This sequence belongs to the ARG7 family. Specifically expressed in the quiescent center and cortex or endodermis initials of root stem niches. Expressed in vascular tissues from hypocotyls, petioles and cotyledons.

The protein localises to the cytoplasm. Its function is as follows. Plays a role in the regulation of cell expansion, root meristem patterning and auxin transport. The polypeptide is Auxin-responsive protein SAUR41 (Arabidopsis thaliana (Mouse-ear cress)).